The chain runs to 465 residues: MAP kinase-interacting serine/threonine-protein kinase 2 (465 aa).

The disordered stretch occupies residues 23 to 72; that stretch reads ELAFSLDQPDHGDSDFGLQCSARPDMPASQPIDIPDAKKRGKKKKRGRAT. The Nuclear localization signal motif lies at 60–66; the sequence is KKRGKKK. Ser74 is subject to Phosphoserine. The 305-residue stretch at 84-388 folds into the Protein kinase domain; it reads QLQEDVLGEG…TPMVLQRNSC (305 aa). ATP contacts are provided by residues 90–98 and Lys113; that span reads LGEGAHARV. 160 to 162 serves as a coordination point for staurosporine; it reads EKM. Asp205 acts as the Proton acceptor in catalysis. Glu209 contributes to the staurosporine binding site. A phosphothreonine mark is found at Thr244 and Thr249. Zn(2+)-binding residues include Cys299, Cys311, and Cys314. The residue at position 379 (Thr379) is a Phosphothreonine. Phosphoserine occurs at positions 437 and 440. The short motif at 444–448 is the MAP kinase binding element; that stretch reads LAQRR. Residue Ser452 is modified to Phosphoserine.

It belongs to the protein kinase superfamily. CAMK Ser/Thr protein kinase family. Monomer. Interacts with the C-terminal regions of EIF4G1 and EIF4G2; this interaction is promoted when MAPK pathways are repressed but repressed upon ERK proteins activation. Also binds to dephosphorylated MAPK3/ERK1 and MAPK1/ERK2. Isoform 1 interaction with phosphorylated MAPK3/ERK1 and MAPK1/ERK2 protects it from dephosphorylation and inactivation. Isoform 2 interacts with ESR2 and EIF4E in the nucleus. It depends on Mg(2+) as a cofactor. Zn(2+) serves as cofactor. Post-translationally, dual phosphorylation of Thr-244 and Thr-249 activates the kinase. Phosphorylation of Thr-379 activates the kinase. Phosphorylated upon arsenic trioxide As(2)O(3) treatment. Phosphorylated by MAPK1/ERK2, MAPK11 and MAPK14. Dephosphorylated by PP2A. As to expression, ubiquitously expressed in all tissues examined. Isoform 2 is expressed at higher levels in the ovary than is isoform 1.

Its subcellular location is the nucleus. It is found in the PML body. The protein localises to the cytoplasm. The enzyme catalyses L-seryl-[protein] + ATP = O-phospho-L-seryl-[protein] + ADP + H(+). It carries out the reaction L-threonyl-[protein] + ATP = O-phospho-L-threonyl-[protein] + ADP + H(+). Inhibited by CGP57380 and staurosporine. Activated by phosphorylation in a negative-feedback regulatory manner in response to chemotherapy (e.g. cytarabine) and thus impairs the generation of antileukemic responses. Serine/threonine-protein kinase that phosphorylates SFPQ/PSF, HNRNPA1 and EIF4E. May play a role in the response to environmental stress and cytokines. Appears to regulate translation by phosphorylating EIF4E, thus increasing the affinity of this protein for the 7-methylguanosine-containing mRNA cap. Required for mediating PP2A-inhibition-induced EIF4E phosphorylation. Triggers EIF4E shuttling from cytoplasm to nucleus. Isoform 1 displays a high basal kinase activity, but isoform 2 exhibits a very low kinase activity. Acts as a mediator of the suppressive effects of IFNgamma on hematopoiesis. Negative regulator for signals that control generation of arsenic trioxide As(2)O(3)-dependent apoptosis and anti-leukemic responses. Involved in anti-apoptotic signaling in response to serum withdrawal. The chain is MAP kinase-interacting serine/threonine-protein kinase 2 (MKNK2) from Homo sapiens (Human).